We begin with the raw amino-acid sequence, 267 residues long: Tryptophan synthase alpha chain (267 aa).

Residues glutamate 49 and aspartate 60 each act as proton acceptor in the active site.

The protein belongs to the TrpA family. As to quaternary structure, tetramer of two alpha and two beta chains.

It carries out the reaction (1S,2R)-1-C-(indol-3-yl)glycerol 3-phosphate + L-serine = D-glyceraldehyde 3-phosphate + L-tryptophan + H2O. It functions in the pathway amino-acid biosynthesis; L-tryptophan biosynthesis; L-tryptophan from chorismate: step 5/5. Functionally, the alpha subunit is responsible for the aldol cleavage of indoleglycerol phosphate to indole and glyceraldehyde 3-phosphate. This chain is Tryptophan synthase alpha chain, found in Methylococcus capsulatus (strain ATCC 33009 / NCIMB 11132 / Bath).